The primary structure comprises 399 residues: Putative endoplasmin-like protein (399 aa).

Lys130 is covalently cross-linked (Glycyl lysine isopeptide (Lys-Gly) (interchain with G-Cter in SUMO2)). The interval 350 to 399 (LDLAVVEEPDEEPEETAEDKEQDKDKEMDVGTDEEKQETAKESTAEKDEL) is disordered. Over residues 354–367 (VVEEPDEEPEETAE) the composition is skewed to acidic residues. The span at 368-399 (DKEQDKDKEMDVGTDEEKQETAKESTAEKDEL) shows a compositional bias: basic and acidic residues.

This sequence belongs to the heat shock protein 90 family.

In terms of biological role, putative molecular chaperone. The sequence is that of Putative endoplasmin-like protein (HSP90B2P) from Homo sapiens (Human).